The chain runs to 1462 residues: Gag-Pro-Pol polyprotein (1462 aa).

A lipid anchor (N-myristoyl glycine; by host) is attached at glycine 2. A disordered region spans residues 93–142 (QIPSRPAPPPPSSSTHDPPDSDPQIPPPYVEPTAPQVLPVMHPHGAPPNH). The residue at position 105 (serine 105) is a Phosphoserine; by host MAPK1. A PPXY motif motif is present at residues 118-121 (PPPY). The PTAP/PSAP motif signature appears at 124 to 127 (PTAP). 2 CCHC-type zinc fingers span residues 355–372 (QPCF…DCTQ) and 378–395 (GPCP…DCPR). A Peptidase A2 domain is found at 476–554 (IEALLDTGAD…NNWAIIGRDA (79 aa)). The active-site Protease; shared with dimeric partner is aspartate 481. The Reverse transcriptase domain occupies 614–804 (LEAGHIEPYT…GTIKFLGQII (191 aa)). Residues aspartate 680, aspartate 755, aspartate 756, aspartate 1040, glutamate 1074, aspartate 1096, aspartate 1157, aspartate 1230, and aspartate 1287 each coordinate Mg(2+). The 135-residue stretch at 1031 to 1165 (INTAPCLFSD…TDALLITPVL (135 aa)) folds into the RNase H type-1 domain. The Integrase catalytic domain occupies 1219 to 1388 (RGLLPNHIWQ…QPIPETHSLS (170 aa)). A DNA-binding region (integrase-type) is located at residues 1393 to 1443 (HWYYFKLPGLNSRQWKGPQEALQEAAGAALIPVSASSAQWIPWRLLKRAAC).

In terms of assembly, homodimer; the homodimers are part of the immature particles. Interacts with human TSG101 and NEDD4; these interactions are essential for budding and release of viral particles. As to quaternary structure, homodimer; further assembles as homohexamers. The cofactor is Mg(2+). Post-translationally, phosphorylation of the matrix protein p19 by MAPK1 seems to play a role in budding. In terms of processing, myristoylated. Myristoylation of the matrix (MA) domain mediates the transport and binding of Gag polyproteins to the host plasma membrane and is required for the assembly of viral particles. Specific enzymatic cleavages by the viral protease yield mature proteins. The polyprotein is cleaved during and after budding, this process is termed maturation. The protease is autoproteolytically processed at its N- and C-termini.

The protein resides in the virion. It carries out the reaction Endonucleolytic cleavage to 5'-phosphomonoester.. The catalysed reaction is DNA(n) + a 2'-deoxyribonucleoside 5'-triphosphate = DNA(n+1) + diphosphate. Its function is as follows. The matrix domain targets Gag, Gag-Pro and Gag-Pro-Pol polyproteins to the plasma membrane via a multipartite membrane binding signal, that includes its myristoylated N-terminus. In terms of biological role, matrix protein. Forms the spherical core of the virus that encapsulates the genomic RNA-nucleocapsid complex. Functionally, binds strongly to viral nucleic acids and promote their aggregation. Also destabilizes the nucleic acids duplexes via highly structured zinc-binding motifs. Its function is as follows. The aspartyl protease mediates proteolytic cleavages of Gag and Gag-Pol polyproteins during or shortly after the release of the virion from the plasma membrane. Cleavages take place as an ordered, step-wise cascade to yield mature proteins. This process is called maturation. Displays maximal activity during the budding process just prior to particle release from the cell (Potential). Cleaves the translation initiation factor eIF4G leading to the inhibition of host cap-dependent translation. In terms of biological role, RT is a multifunctional enzyme that converts the viral RNA genome into dsDNA in the cytoplasm, shortly after virus entry into the cell. This enzyme displays a DNA polymerase activity that can copy either DNA or RNA templates, and a ribonuclease H (RNase H) activity that cleaves the RNA strand of RNA-DNA heteroduplexes in a partially processive 3' to 5'-endonucleasic mode. Conversion of viral genomic RNA into dsDNA requires many steps. A tRNA-Pro binds to the primer-binding site (PBS) situated at the 5'-end of the viral RNA. RT uses the 3' end of the tRNA primer to perform a short round of RNA-dependent minus-strand DNA synthesis. The reading proceeds through the U5 region and ends after the repeated (R) region which is present at both ends of viral RNA. The portion of the RNA-DNA heteroduplex is digested by the RNase H, resulting in a ssDNA product attached to the tRNA primer. This ssDNA/tRNA hybridizes with the identical R region situated at the 3' end of viral RNA. This template exchange, known as minus-strand DNA strong stop transfer, can be either intra- or intermolecular. RT uses the 3' end of this newly synthesized short ssDNA to perform the RNA-dependent minus-strand DNA synthesis of the whole template. RNase H digests the RNA template except for a polypurine tract (PPT) situated at the 5' end of the genome. It is not clear if both polymerase and RNase H activities are simultaneous. RNase H probably can proceed both in a polymerase-dependent (RNA cut into small fragments by the same RT performing DNA synthesis) and a polymerase-independent mode (cleavage of remaining RNA fragments by free RTs). Secondly, RT performs DNA-directed plus-strand DNA synthesis using the PPT that has not been removed by RNase H as primer. PPT and tRNA primers are then removed by RNase H. The 3' and 5' ssDNA PBS regions hybridize to form a circular dsDNA intermediate. Strand displacement synthesis by RT to the PBS and PPT ends produces a blunt ended, linear dsDNA copy of the viral genome that includes long terminal repeats (LTRs) at both ends. Catalyzes viral DNA integration into the host chromosome, by performing a series of DNA cutting and joining reactions. This chain is Gag-Pro-Pol polyprotein (gag-pro-pol), found in Human T-cell leukemia virus 1 (isolate Caribbea HS-35 subtype A) (HTLV-1).